The primary structure comprises 473 residues: GTPase Der (473 aa).

EngA-type G domains lie at 3–167 and 203–378; these read FTVA…GKDR and LRVA…RVWN. GTP is bound by residues 9 to 16, 56 to 60, 119 to 122, 209 to 216, 256 to 260, and 321 to 324; these read GRPNVGKS, DTAGL, NKSE, GRPNAGKS, DTAGM, and NKWD. One can recognise a KH-like domain in the interval 379–463; the sequence is KRISTAKLNR…PIRIHFRSAE (85 aa).

This sequence belongs to the TRAFAC class TrmE-Era-EngA-EngB-Septin-like GTPase superfamily. EngA (Der) GTPase family. In terms of assembly, associates with the 50S ribosomal subunit.

Functionally, GTPase that plays an essential role in the late steps of ribosome biogenesis. This chain is GTPase Der, found in Rhizobium leguminosarum bv. trifolii (strain WSM2304).